A 460-amino-acid chain; its full sequence is MVFDTIAAISTFPGEAGIGIVRLSGDDALEIISKIFKPYKSKDIKKVKSHTLHYGHIVDPETEEVYDEVLVSIMKKPNTYTREDIVEINCHGGIVVTSKILELVLKQGARLAEPGEFTKRAFLNGRIDLSQAEAVIDIIRAKTMLANRYAQKQLVGYVGSKIKEMKDKIMGLLVHLLALIDFPEEDVEELERKEILETAKEIVEDIDKLIASSESGRIIREGLKTAIIGKPNVGKSSLLNALLKENRAIVTDIPGTTRDIIEEYVNVKGIPIKLIDTAGIRDTDELVEKIGVTKSKEVLAEADLILFVLDASRELTKEDYEIFDILTGKNIIFVLNKIDLPKKIDEKELKDLTKDGIIIEVSTVEKIGLEELENTIYNLVFRGDISLREDEIVINSRHKEALINAKKYMESCVEAIEGGYSEDLITIDLNAALDQLGKITGETATEDLINEIFERFCVGK.

(6S)-5-formyl-5,6,7,8-tetrahydrofolate-binding residues include Arg22, Glu87, and Arg126. In terms of domain architecture, TrmE-type G spans 222–381 (GLKTAIIGKP…LENTIYNLVF (160 aa)). Asn232 contacts K(+). GTP contacts are provided by residues 232-237 (NVGKSS), 251-257 (TDIPGTT), and 276-279 (DTAG). Ser236 is a binding site for Mg(2+). K(+) is bound by residues Thr251, Ile253, and Thr256. Mg(2+) is bound at residue Thr257. Lys460 lines the (6S)-5-formyl-5,6,7,8-tetrahydrofolate pocket.

The protein belongs to the TRAFAC class TrmE-Era-EngA-EngB-Septin-like GTPase superfamily. TrmE GTPase family. In terms of assembly, homodimer. Heterotetramer of two MnmE and two MnmG subunits. Requires K(+) as cofactor.

Its subcellular location is the cytoplasm. In terms of biological role, exhibits a very high intrinsic GTPase hydrolysis rate. Involved in the addition of a carboxymethylaminomethyl (cmnm) group at the wobble position (U34) of certain tRNAs, forming tRNA-cmnm(5)s(2)U34. This chain is tRNA modification GTPase MnmE, found in Thermoanaerobacter pseudethanolicus (strain ATCC 33223 / 39E) (Clostridium thermohydrosulfuricum).